Here is a 253-residue protein sequence, read N- to C-terminus: Sulfate transporter CysZ (253 aa).

4 helical membrane-spanning segments follow: residues 31 to 51 (FVIL…WWLF), 75 to 95 (LLWP…FSTI), 151 to 171 (IVLL…PVLW), and 222 to 242 (IPLL…AMWV).

Belongs to the CysZ family.

The protein resides in the cell inner membrane. Its function is as follows. High affinity, high specificity proton-dependent sulfate transporter, which mediates sulfate uptake. Provides the sulfur source for the cysteine synthesis pathway. The protein is Sulfate transporter CysZ of Shigella flexneri serotype 5b (strain 8401).